The chain runs to 414 residues: E3 ubiquitin-protein ligase makorin-2 (414 aa).

C3H1-type zinc fingers lie at residues 2-29 and 31-58; these read STKQVTCRYFLHGVCREGSRCLFSHDLT and SKPSTICKYYQRGACAYGDRCRYDHIKP. Positions 57-94 are disordered; sequence KPPGRGSGAPADHSNRSSSSAGASAPGPGPPANTSKHL. Low complexity predominate over residues 73–82; it reads SSSSAGASAP. The C3H1-type 3 zinc-finger motif lies at 164-191; the sequence is QTSPQICPFLAAGQCQYGESCPYLHGEM. The makorin-type Cys-His stretch occupies residues 192–221; it reads CEICRQHVLHPHDPEQRAAHEKKCMVAFEM. The segment at 237–291 adopts an RING-type zinc-finger fold; that stretch reads CKICLDVVYEKSSPSERRFGILSSCAHTYCLNCIRQWRCVEQLHNQIRKSCPECR. The C3H1-type 4 zinc-finger motif lies at 320–349; that stretch reads GVSKKACKYFDQGRGTCPFGGKCFYMHAYA.

The protein resides in the cytoplasm. It is found in the nucleus. The catalysed reaction is S-ubiquitinyl-[E2 ubiquitin-conjugating enzyme]-L-cysteine + [acceptor protein]-L-lysine = [E2 ubiquitin-conjugating enzyme]-L-cysteine + N(6)-ubiquitinyl-[acceptor protein]-L-lysine.. Its pathway is protein modification; protein ubiquitination. E3 ubiquitin ligase catalyzing the covalent attachment of ubiquitin moieties onto substrate proteins. Inhibits neurogenesis and axis formation during embryonic development by modulating the phosphatidylinositol 3-kinase (PI3K) pathway. Acts downstream of PI3K and akt1 to up-regulate gsk3b mRNA expression. This chain is E3 ubiquitin-protein ligase makorin-2 (mkrn2), found in Danio rerio (Zebrafish).